Reading from the N-terminus, the 330-residue chain is Diacylglycerol acyltransferase/mycolyltransferase Ag85B (330 aa).

The N-terminal stretch at 1 to 40 is a signal peptide; that stretch reads MTDLSKKVRAWGRRLLVGTAAAVTLPGLIGLAGGAPTAGA. 82 to 83 serves as a coordination point for substrate; it reads LR. A fibronectin-binding region spans residues 98–108; that stretch reads FEWYYQSGLSI. The cysteines at positions 127 and 132 are disulfide-linked. 2 residues coordinate substrate: serine 166 and aspartate 194. Residue serine 166 is the Nucleophile of the active site. The active site involves glutamate 270. Substrate-binding positions include 272–275, lysine 279, and 302–304; these read FVRS and HSW. The active site involves histidine 302.

This sequence belongs to the mycobacterial A85 antigen family.

It localises to the secreted. It catalyses the reaction 2 alpha,alpha'-trehalose 6-mycolate = alpha,alpha'-trehalose 6,6'-bismycolate + alpha,alpha-trehalose. The catalysed reaction is an acyl-CoA + a 1,2-diacyl-sn-glycerol = a triacyl-sn-glycerol + CoA. The antigen 85 proteins (FbpA, FbpB, FbpC) are responsible for the high affinity of mycobacteria for fibronectin, a large adhesive glycoprotein, which facilitates the attachment of M.tuberculosis to murine alveolar macrophages (AMs). They also help to maintain the integrity of the cell wall by catalyzing the transfer of mycolic acids to cell wall arabinogalactan and through the synthesis of alpha,alpha-trehalose dimycolate (TDM, cord factor). They catalyze the transfer of a mycoloyl residue from one molecule of alpha,alpha-trehalose monomycolate (TMM) to another TMM, leading to the formation of TDM. The sequence is that of Diacylglycerol acyltransferase/mycolyltransferase Ag85B (fbpB) from Mycobacterium scrofulaceum.